A 405-amino-acid polypeptide reads, in one-letter code: Argininosuccinate synthase (405 aa).

Residue 8–16 coordinates ATP; it reads AYSGGLDTS. Positions 86 and 91 each coordinate L-citrulline. Glycine 116 is an ATP binding site. The L-aspartate site is built by threonine 118, asparagine 122, and aspartate 123. Residue asparagine 122 coordinates L-citrulline. L-citrulline contacts are provided by arginine 126, serine 175, serine 184, glutamate 260, and tyrosine 272.

It belongs to the argininosuccinate synthase family. Type 1 subfamily. In terms of assembly, homotetramer.

Its subcellular location is the cytoplasm. It carries out the reaction L-citrulline + L-aspartate + ATP = 2-(N(omega)-L-arginino)succinate + AMP + diphosphate + H(+). The protein operates within amino-acid biosynthesis; L-arginine biosynthesis; L-arginine from L-ornithine and carbamoyl phosphate: step 2/3. This is Argininosuccinate synthase from Koribacter versatilis (strain Ellin345).